Reading from the N-terminus, the 61-residue chain is Large ribosomal subunit protein eL37 (61 aa).

Residues C20, C23, C35, and C38 each coordinate Zn(2+). A C4-type zinc finger spans residues 20 to 38 (CPRCGRHSYNIVKGYCAAC).

This sequence belongs to the eukaryotic ribosomal protein eL37 family. Requires Zn(2+) as cofactor.

Binds to the 23S rRNA. The polypeptide is Large ribosomal subunit protein eL37 (Caldivirga maquilingensis (strain ATCC 700844 / DSM 13496 / JCM 10307 / IC-167)).